A 163-amino-acid polypeptide reads, in one-letter code: Phosphopantetheine adenylyltransferase (163 aa).

2 residues coordinate ATP: Ser-10 and His-18. Ser-10 contacts substrate. 3 residues coordinate substrate: Lys-42, Thr-75, and Arg-89. ATP is bound by residues 90–92 (GIR), Glu-100, and 125–131 (YAHVSSS).

The protein belongs to the bacterial CoaD family. In terms of assembly, homohexamer. Requires Mg(2+) as cofactor.

The protein localises to the cytoplasm. It catalyses the reaction (R)-4'-phosphopantetheine + ATP + H(+) = 3'-dephospho-CoA + diphosphate. Its pathway is cofactor biosynthesis; coenzyme A biosynthesis; CoA from (R)-pantothenate: step 4/5. Reversibly transfers an adenylyl group from ATP to 4'-phosphopantetheine, yielding dephospho-CoA (dPCoA) and pyrophosphate. This chain is Phosphopantetheine adenylyltransferase, found in Enterococcus faecalis (strain ATCC 700802 / V583).